The chain runs to 223 residues: Zinc-finger homeodomain protein 12 (223 aa).

Over residues 1–20 (MSSLSKPNRQFLSPTTNNQD) the composition is skewed to polar residues. The tract at residues 1–24 (MSSLSKPNRQFLSPTTNNQDTGRE) is disordered. The segment at 37 to 88 (YNECLKNHAVSLGGHALDGCGEFTPKSTTILTDPPSLRCDACGCHRNFHRRS) adopts a ZF-HD dimerization-type; degenerate zinc-finger fold. The homeobox; atypical DNA-binding region spans 147-204 (KKHKRTKFTAEQKVKMRGFAERAGWKINGWDEKWVREFCSEVGIERKVLKVWIHNNKY).

In terms of assembly, homo- and heterodimer with other ZFHD proteins. Interacts with ZHD11.

The protein resides in the nucleus. Functionally, putative transcription factor. The polypeptide is Zinc-finger homeodomain protein 12 (ZHD12) (Arabidopsis thaliana (Mouse-ear cress)).